The primary structure comprises 89 residues: Small ribosomal subunit protein uS15 (89 aa).

The protein belongs to the universal ribosomal protein uS15 family. As to quaternary structure, part of the 30S ribosomal subunit. Forms a bridge to the 50S subunit in the 70S ribosome, contacting the 23S rRNA.

Functionally, one of the primary rRNA binding proteins, it binds directly to 16S rRNA where it helps nucleate assembly of the platform of the 30S subunit by binding and bridging several RNA helices of the 16S rRNA. In terms of biological role, forms an intersubunit bridge (bridge B4) with the 23S rRNA of the 50S subunit in the ribosome. This Oenococcus oeni (strain ATCC BAA-331 / PSU-1) protein is Small ribosomal subunit protein uS15.